A 199-amino-acid chain; its full sequence is Protein Maeo_0138 (199 aa).

Positions 7–197 (EEGKFAVKFA…ELSPNGKIVE (191 aa)) constitute an AMMECR1 domain.

The protein is Protein Maeo_0138 of Methanococcus aeolicus (strain ATCC BAA-1280 / DSM 17508 / OCM 812 / Nankai-3).